The primary structure comprises 450 residues: tRNA modification GTPase MnmE (450 aa).

3 residues coordinate (6S)-5-formyl-5,6,7,8-tetrahydrofolate: Arg26, Glu84, and Lys123. A TrmE-type G domain is found at 219–376 (GMHVVLVGQP…LKAKLLEMIG (158 aa)). Residue Asn229 coordinates K(+). GTP contacts are provided by residues 229-234 (NVGKSS), 248-254 (TDIAGTT), 273-276 (DTAG), and 357-359 (SAR). Ser233 serves as a coordination point for Mg(2+). Residues Thr248, Ile250, and Thr253 each contribute to the K(+) site. Thr254 is a binding site for Mg(2+). Lys450 is a (6S)-5-formyl-5,6,7,8-tetrahydrofolate binding site.

The protein belongs to the TRAFAC class TrmE-Era-EngA-EngB-Septin-like GTPase superfamily. TrmE GTPase family. As to quaternary structure, homodimer. Heterotetramer of two MnmE and two MnmG subunits. The cofactor is K(+).

The protein resides in the cytoplasm. In terms of biological role, exhibits a very high intrinsic GTPase hydrolysis rate. Involved in the addition of a carboxymethylaminomethyl (cmnm) group at the wobble position (U34) of certain tRNAs, forming tRNA-cmnm(5)s(2)U34. The protein is tRNA modification GTPase MnmE of Chromobacterium violaceum (strain ATCC 12472 / DSM 30191 / JCM 1249 / CCUG 213 / NBRC 12614 / NCIMB 9131 / NCTC 9757 / MK).